We begin with the raw amino-acid sequence, 44 residues long: Cytochrome b559 subunit beta (44 aa).

Residues 19–35 (WVSIHALAVPTIFFLGS) form a helical membrane-spanning segment. His23 contributes to the heme binding site.

It belongs to the PsbE/PsbF family. Heterodimer of an alpha subunit and a beta subunit. PSII is composed of 1 copy each of membrane proteins PsbA, PsbB, PsbC, PsbD, PsbE, PsbF, PsbH, PsbI, PsbJ, PsbK, PsbL, PsbM, PsbT, PsbX, PsbY, PsbZ, Psb30/Ycf12, at least 3 peripheral proteins of the oxygen-evolving complex and a large number of cofactors. It forms dimeric complexes. It depends on heme b as a cofactor.

The protein localises to the plastid. It localises to the chloroplast thylakoid membrane. Functionally, this b-type cytochrome is tightly associated with the reaction center of photosystem II (PSII). PSII is a light-driven water:plastoquinone oxidoreductase that uses light energy to abstract electrons from H(2)O, generating O(2) and a proton gradient subsequently used for ATP formation. It consists of a core antenna complex that captures photons, and an electron transfer chain that converts photonic excitation into a charge separation. In Chlamydomonas moewusii (Chlamydomonas eugametos), this protein is Cytochrome b559 subunit beta.